The chain runs to 256 residues: Putative ankyrin repeat protein FPV231 (256 aa).

ANK repeat units lie at residues Met1–Ser20, Glu24–Ile53, Tyr57–Leu86, His90–Ile119, and Glu123–Ile151.

The chain is Putative ankyrin repeat protein FPV231 from Vertebrata (FPV).